Consider the following 145-residue polypeptide: Cytochrome c2 (145 aa).

A signal peptide spans Met1–Ala21. Gln22 carries the pyrrolidone carboxylic acid modification. Positions 36, 39, 40, and 121 each coordinate heme c.

Belongs to the cytochrome c family. Binds 1 heme c group covalently per subunit.

The protein localises to the periplasm. Functionally, cytochrome c2 is found mainly in purple, non-sulfur, photosynthetic bacteria where it functions as the electron donor to the oxidized bacteriochlorophyll in the photophosphorylation pathway. However, it may also have a role in the respiratory chain and is found in some non-photosynthetic bacteria. The chain is Cytochrome c2 (cycA) from Cereibacter sphaeroides (strain ATCC 17023 / DSM 158 / JCM 6121 / CCUG 31486 / LMG 2827 / NBRC 12203 / NCIMB 8253 / ATH 2.4.1.) (Rhodobacter sphaeroides).